Consider the following 445-residue polypeptide: Phosphoglucosamine mutase (445 aa).

The active-site Phosphoserine intermediate is serine 102. Serine 102, aspartate 241, aspartate 243, and aspartate 245 together coordinate Mg(2+). Position 102 is a phosphoserine (serine 102).

It belongs to the phosphohexose mutase family. It depends on Mg(2+) as a cofactor. In terms of processing, activated by phosphorylation.

It catalyses the reaction alpha-D-glucosamine 1-phosphate = D-glucosamine 6-phosphate. In terms of biological role, catalyzes the conversion of glucosamine-6-phosphate to glucosamine-1-phosphate. This is Phosphoglucosamine mutase from Zymomonas mobilis subsp. mobilis (strain ATCC 31821 / ZM4 / CP4).